We begin with the raw amino-acid sequence, 1342 residues long: DNA-directed RNA polymerase subunit beta (1342 aa).

The protein belongs to the RNA polymerase beta chain family. The RNAP catalytic core consists of 2 alpha, 1 beta, 1 beta' and 1 omega subunit. When a sigma factor is associated with the core the holoenzyme is formed, which can initiate transcription.

It carries out the reaction RNA(n) + a ribonucleoside 5'-triphosphate = RNA(n+1) + diphosphate. DNA-dependent RNA polymerase catalyzes the transcription of DNA into RNA using the four ribonucleoside triphosphates as substrates. The sequence is that of DNA-directed RNA polymerase subunit beta from Pectobacterium carotovorum subsp. carotovorum (strain PC1).